Consider the following 475-residue polypeptide: Luvungin A synthase CYP716AC1 (475 aa).

A helical membrane pass occupies residues 3-23; sequence FIILSLLLLSLALYSLYYVII. Residue Cys-423 participates in heme binding.

This sequence belongs to the cytochrome P450 family. Requires heme as cofactor. Expressed in flowers, maturing fruits and in juice vesicles.

Its subcellular location is the membrane. The catalysed reaction is (21S)-21-acetoxyl-apo-melianone + reduced [NADPH--hemoprotein reductase] + O2 = luvungin A + oxidized [NADPH--hemoprotein reductase] + H2O + H(+). It participates in secondary metabolite biosynthesis; terpenoid biosynthesis. In terms of biological role, monooxygenase involved in the biosynthesis of limonoids triterpene natural products such as limonin, a compound with insecticidal activity responsible for the bitter taste in citrus. Catalyzes the conversion of (21S)-21-acetoxyl-apo-melianone to luvungin A. This Citrus sinensis (Sweet orange) protein is Luvungin A synthase CYP716AC1.